The sequence spans 245 residues: tRNA pseudouridine synthase A (245 aa).

Residue Asp52 is the Nucleophile of the active site. Tyr111 serves as a coordination point for substrate.

The protein belongs to the tRNA pseudouridine synthase TruA family. Homodimer.

The catalysed reaction is uridine(38/39/40) in tRNA = pseudouridine(38/39/40) in tRNA. In terms of biological role, formation of pseudouridine at positions 38, 39 and 40 in the anticodon stem and loop of transfer RNAs. The chain is tRNA pseudouridine synthase A from Rhodospirillum centenum (strain ATCC 51521 / SW).